The sequence spans 616 residues: Dihydroxy-acid dehydratase (616 aa).

Residue D81 participates in Mg(2+) binding. Residue C122 participates in [2Fe-2S] cluster binding. Residues D123 and K124 each coordinate Mg(2+). K124 is subject to N6-carboxylysine. C195 contributes to the [2Fe-2S] cluster binding site. Residue E491 coordinates Mg(2+). The active-site Proton acceptor is S517.

It belongs to the IlvD/Edd family. In terms of assembly, homodimer. Requires [2Fe-2S] cluster as cofactor. The cofactor is Mg(2+).

The enzyme catalyses (2R)-2,3-dihydroxy-3-methylbutanoate = 3-methyl-2-oxobutanoate + H2O. It carries out the reaction (2R,3R)-2,3-dihydroxy-3-methylpentanoate = (S)-3-methyl-2-oxopentanoate + H2O. The protein operates within amino-acid biosynthesis; L-isoleucine biosynthesis; L-isoleucine from 2-oxobutanoate: step 3/4. It participates in amino-acid biosynthesis; L-valine biosynthesis; L-valine from pyruvate: step 3/4. Functions in the biosynthesis of branched-chain amino acids. Catalyzes the dehydration of (2R,3R)-2,3-dihydroxy-3-methylpentanoate (2,3-dihydroxy-3-methylvalerate) into 2-oxo-3-methylpentanoate (2-oxo-3-methylvalerate) and of (2R)-2,3-dihydroxy-3-methylbutanoate (2,3-dihydroxyisovalerate) into 2-oxo-3-methylbutanoate (2-oxoisovalerate), the penultimate precursor to L-isoleucine and L-valine, respectively. This Pectobacterium carotovorum subsp. carotovorum (strain PC1) protein is Dihydroxy-acid dehydratase.